Reading from the N-terminus, the 130-residue chain is U-scoloptoxin(16)-Er4a (130 aa).

The first 26 residues, M1–A26, serve as a signal peptide directing secretion.

This sequence belongs to the scoloptoxin-16 family. In terms of processing, contains 3 disulfide bonds. As to expression, expressed by the venom gland.

The protein resides in the secreted. This Ethmostigmus rubripes (Giant centipede) protein is U-scoloptoxin(16)-Er4a.